The primary structure comprises 126 residues: Large ribosomal subunit protein uL22 (126 aa).

This sequence belongs to the universal ribosomal protein uL22 family. As to quaternary structure, part of the 50S ribosomal subunit.

In terms of biological role, this protein binds specifically to 23S rRNA; its binding is stimulated by other ribosomal proteins, e.g. L4, L17, and L20. It is important during the early stages of 50S assembly. It makes multiple contacts with different domains of the 23S rRNA in the assembled 50S subunit and ribosome. Its function is as follows. The globular domain of the protein is located near the polypeptide exit tunnel on the outside of the subunit, while an extended beta-hairpin is found that lines the wall of the exit tunnel in the center of the 70S ribosome. The protein is Large ribosomal subunit protein uL22 of Paracoccus denitrificans (strain Pd 1222).